We begin with the raw amino-acid sequence, 208 residues long: MKKFIFCFLCLWTLNIFAASKTYPNKLNRCKITRNIFNDYEPKVFETTNNLLRKTGRLSKFYGERILIKGKVLDQNCVPVADAKVYLWQAGSGGKYPYEPLKTRVDKRRFTSKSDSSFTGSGIATTNNKGEYYFISMLPYTSSRYLRSANIRIEHPSLTTLETRLDLSDQNMCDNECGEVNPILIEPQENMPSYCFDLVLQGTTLKRY.

The protein belongs to the intradiol ring-cleavage dioxygenase family.

The protein is Putative dioxygenase RC0543 of Rickettsia conorii (strain ATCC VR-613 / Malish 7).